A 165-amino-acid chain; its full sequence is Glucosamine 6-phosphate N-acetyltransferase 1 (165 aa).

Residues 22–165 (YRIRPLELAD…EKNVQMGLYF (144 aa)) form the N-acetyltransferase domain. Substrate-binding positions include S44, 92–95 (KFIR), and 104–106 (EDV). Residue 114–119 (GRGLGE) coordinates acetyl-CoA. 135–136 (YK) is a substrate binding site. An acetyl-CoA-binding site is contributed by 149-151 (YAK).

Belongs to the acetyltransferase family. GNA1 subfamily. In terms of assembly, homodimer. In terms of tissue distribution, highly expressed in the root elongation zone and at lower levels in leaves and grains.

Its subcellular location is the endoplasmic reticulum membrane. It catalyses the reaction D-glucosamine 6-phosphate + acetyl-CoA = N-acetyl-D-glucosamine 6-phosphate + CoA + H(+). Its pathway is nucleotide-sugar biosynthesis; UDP-N-acetyl-alpha-D-glucosamine biosynthesis; N-acetyl-alpha-D-glucosamine 1-phosphate from alpha-D-glucosamine 6-phosphate (route I): step 1/2. In terms of biological role, acetyltransferase involved in de novo biosynthesis of UDP-N-acetylglucosamine (UDP-GlcNAc) in roots and is required for maintaining normal root cell shape. UDP-GlcNAc is an essential metabolite that serves as an initial sugar donor for N-glycan synthesis and thus plays an important role in protein and lipid glycosylation. The sequence is that of Glucosamine 6-phosphate N-acetyltransferase 1 (GNA1) from Oryza sativa subsp. japonica (Rice).